Reading from the N-terminus, the 99-residue chain is Integration host factor subunit alpha (99 aa).

The segment at 51-71 (NFDLRDKNQRPGRNPKTGEDI) is disordered.

The protein belongs to the bacterial histone-like protein family. As to quaternary structure, heterodimer of an alpha and a beta chain.

Functionally, this protein is one of the two subunits of integration host factor, a specific DNA-binding protein that functions in genetic recombination as well as in transcriptional and translational control. This Dickeya dadantii (strain 3937) (Erwinia chrysanthemi (strain 3937)) protein is Integration host factor subunit alpha (ihfA).